The primary structure comprises 704 residues: Elongation factor G (704 aa).

A tr-type G domain is found at 9–285 (AKVRNIGIMA…AIVAYLPSPL (277 aa)). GTP contacts are provided by residues 18–25 (AHIDAGKT), 82–86 (DTPGH), and 136–139 (NKMD).

Belongs to the TRAFAC class translation factor GTPase superfamily. Classic translation factor GTPase family. EF-G/EF-2 subfamily.

The protein resides in the cytoplasm. Catalyzes the GTP-dependent ribosomal translocation step during translation elongation. During this step, the ribosome changes from the pre-translocational (PRE) to the post-translocational (POST) state as the newly formed A-site-bound peptidyl-tRNA and P-site-bound deacylated tRNA move to the P and E sites, respectively. Catalyzes the coordinated movement of the two tRNA molecules, the mRNA and conformational changes in the ribosome. This chain is Elongation factor G, found in Thermobifida fusca (strain YX).